Here is a 406-residue protein sequence, read N- to C-terminus: Cytochrome P450 165C4 (406 aa).

C356 provides a ligand contact to heme.

Belongs to the cytochrome P450 family. Heme is required as a cofactor.

The protein operates within antibiotic biosynthesis; vancomycin biosynthesis. Its function is as follows. Involved in the coupling of aromatic side chains of the heptapeptide of vancomycin. In Amycolatopsis orientalis (Nocardia orientalis), this protein is Cytochrome P450 165C4 (cyp165C4).